The primary structure comprises 420 residues: 3-isopropylmalate dehydratase large subunit (420 aa).

Residues cysteine 300, cysteine 361, and cysteine 364 each coordinate [4Fe-4S] cluster.

It belongs to the aconitase/IPM isomerase family. LeuC type 2 subfamily. In terms of assembly, heterodimer of LeuC and LeuD. [4Fe-4S] cluster serves as cofactor.

It carries out the reaction (2R,3S)-3-isopropylmalate = (2S)-2-isopropylmalate. It functions in the pathway amino-acid biosynthesis; L-leucine biosynthesis; L-leucine from 3-methyl-2-oxobutanoate: step 2/4. Functionally, catalyzes the isomerization between 2-isopropylmalate and 3-isopropylmalate, via the formation of 2-isopropylmaleate. The chain is 3-isopropylmalate dehydratase large subunit from Endomicrobium trichonymphae.